Here is an 848-residue protein sequence, read N- to C-terminus: Aryl hydrocarbon receptor (848 aa).

Residues 1-9 constitute a propeptide that is removed on maturation; it reads MSSGANITY. A disordered region spans residues 1–38; it reads MSSGANITYASRKRRKPVQKTVKPIPAEGIKSNPSKRH. 2 consecutive short sequence motifs (nuclear localization signal) follow at residues 12-15 and 36-41; these read RKRR and KRHRDR. The region spanning 26-79 is the bHLH domain; the sequence is PAEGIKSNPSKRHRDRLNTELDRLASLLPFPQDVINKLDKLSVLRLSVSYLRAK. A DNA-binding region spans residues 37–65; that stretch reads RHRDRLNTELDRLASLLPFPQDVINKLDK. Required for maintaining the overall integrity of the AHR:ARNT heterodimer and its transcriptional activity regions lie at residues 49–81, 116–124, and 260–262; these read LASL…AKSF, LLQALNGFV, and FAI. The short motif at 63–71 is the Nuclear export signal element; it reads LDKLSVLRL. A PAS 1 domain is found at 111 to 175; the sequence is QEGEFLLQAL…AEFQRQLHWA (65 aa). One can recognise a PAS 2 domain in the interval 266–336; that stretch reads LQPPSILEIR…CAESHIRMIK (71 aa). The PAC domain occupies 342–383; it reads MTVFRLLAKHSRWRWVQSNARLIYRNGRPDYIIVTQRPLTDE. Positions 421–449 are disordered; the sequence is LPIRTKSNTSRKDWAPQSTPSKDSFHPSS. Residues 436-449 show a composition bias toward polar residues; it reads PQSTPSKDSFHPSS.

In terms of assembly, homodimer. Heterodimer; efficient DNA binding requires dimerization with another bHLH protein. Interacts with ARNT; the heterodimer ARNT:AHR binds to core DNA sequence 5'-TGCGTG-3' within the dioxin response element (DRE) of target gene promoters and activates their transcription. Binds MYBBP1A. Interacts with coactivators including SRC-1, RIP140 and NOCA7, and with the corepressor SMRT. Interacts with NEDD8 and IVNS1ABP. Interacts with BMAL1. Interacts with HSP90AB1. Interacts with TIPARP; leading to mono-ADP-ribosylation of AHR and subsequent inhibition of AHR. In terms of processing, mono-ADP-ribosylated, leading to inhibit transcription activator activity of AHR.

Its subcellular location is the cytoplasm. It is found in the nucleus. Its function is as follows. Ligand-activated transcription factor that enables cells to adapt to changing conditions by sensing compounds from the environment, diet, microbiome and cellular metabolism, and which plays important roles in development, immunity and cancer. Upon ligand binding, translocates into the nucleus, where it heterodimerizes with ARNT and induces transcription by binding to xenobiotic response elements (XRE). Regulates a variety of biological processes, including angiogenesis, hematopoiesis, drug and lipid metabolism, cell motility and immune modulation. Xenobiotics can act as ligands: upon xenobiotic-binding, activates the expression of multiple phase I and II xenobiotic chemical metabolizing enzyme genes (such as the CYP1A1 gene). Mediates biochemical and toxic effects of halogenated aromatic hydrocarbons. Next to xenobiotics, natural ligands derived from plants, microbiota, and endogenous metabolism are potent AHR agonists. Tryptophan (Trp) derivatives constitute an important class of endogenous AHR ligands. Acts as a negative regulator of anti-tumor immunity: indoles and kynurenic acid generated by Trp catabolism act as ligand and activate AHR, thereby promoting AHR-driven cancer cell motility and suppressing adaptive immunity. Regulates the circadian clock by inhibiting the basal and circadian expression of the core circadian component PER1. Inhibits PER1 by repressing the CLOCK-BMAL1 heterodimer mediated transcriptional activation of PER1. The heterodimer ARNT:AHR binds to core DNA sequence 5'-TGCGTG-3' within the dioxin response element (DRE) of target gene promoters and activates their transcription. This Mus musculus castaneus (Southeastern Asian house mouse) protein is Aryl hydrocarbon receptor (Ahr).